Consider the following 125-residue polypeptide: Monothiol glutaredoxin-S2 (125 aa).

The region spanning 28-124 is the Glutaredoxin domain; sequence AERVGRLVRE…PRLREVGALC (97 aa). A [2Fe-2S] cluster-binding site is contributed by Cys-48.

The protein belongs to the glutaredoxin family. CC-type subfamily.

It is found in the cytoplasm. In terms of biological role, may only reduce GSH-thiol disulfides, but not protein disulfides. The protein is Monothiol glutaredoxin-S2 (GRXS2) of Oryza sativa subsp. japonica (Rice).